A 416-amino-acid chain; its full sequence is PTS system N-acetylglucosamine-specific EIIC component (416 aa).

One can recognise a PTS EIIC type-1 domain in the interval 16–406 (SGLFQGLQKV…FNLKTPGREP (391 aa)). 10 helical membrane-spanning segments follow: residues 68-88 (AGGA…AIGF), 96-116 (TALA…AFPV), 130-150 (TYND…AVLW), 170-190 (LVPI…GLVW), 196-216 (GISN…ALFG), 266-286 (IFQA…ALAM), 298-318 (VLGM…TEPI), 323-343 (MFIA…SMAI), 344-364 (TWGL…DYAL), and 375-395 (IIPI…FAIV).

Its subcellular location is the cell membrane. Functionally, the phosphoenolpyruvate-dependent sugar phosphotransferase system (sugar PTS), a major carbohydrate active transport system, catalyzes the phosphorylation of incoming sugar substrates concomitantly with their translocation across the cell membrane. This system is involved in N-acetylglucosamine (GlcNAc) transport. High-affinity permease, which exhibits a narrow specificity for GlcNAc. Essential for C-signaling between vegetative growth and development. This is PTS system N-acetylglucosamine-specific EIIC component from Streptomyces coelicolor (strain ATCC BAA-471 / A3(2) / M145).